A 156-amino-acid chain; its full sequence is Transcription factor MafF (156 aa).

Residues 51 to 76 form a basic motif region; sequence RLKQRRRTLKNRGYAASCRVKRVCQK. Residues 51–114 form the bZIP domain; that stretch reads RLKQRRRTLK…DALRGKCEAL (64 aa). Residues 79–93 form a leucine-zipper region; sequence LQKQKSELEREVDKL.

The protein belongs to the bZIP family. Maf subfamily. As to quaternary structure, monomer and homo- or heterodimer. Interacts with MIP. Forms high affinity heterodimers with members of the CNC-bZIP family such as NFE2L1/NRF1. As to expression, highly expressed in the lung, lower expression in the brain, thymus, liver, spleen, intestine, kidney, heart, muscle, and ovary. Not significantly expressed in hematopoietic cells.

It localises to the nucleus. Functionally, since they lack a putative transactivation domain, the small Mafs behave as transcriptional repressors when they dimerize among themselves. However, they seem to serve as transcriptional activators by dimerizing with other (usually larger) basic-zipper proteins, such as NFE2L1/NRF1, and recruiting them to specific DNA-binding sites. Interacts with the upstream promoter region of the oxytocin receptor gene. May be a transcriptional enhancer in the up-regulation of the oxytocin receptor gene at parturition. The protein is Transcription factor MafF (Maff) of Mus musculus (Mouse).